We begin with the raw amino-acid sequence, 152 residues long: Aspartate carbamoyltransferase regulatory chain (152 aa).

Zn(2+)-binding residues include cysteine 108, cysteine 113, cysteine 137, and cysteine 140.

This sequence belongs to the PyrI family. As to quaternary structure, contains catalytic and regulatory chains. Zn(2+) is required as a cofactor.

Involved in allosteric regulation of aspartate carbamoyltransferase. The chain is Aspartate carbamoyltransferase regulatory chain from Neisseria meningitidis serogroup B (strain ATCC BAA-335 / MC58).